The chain runs to 79 residues: Eumenine mastoparan-OD (79 aa).

Positions 1–24 (MKQTIVIVLLAAVAMMACLQMVAA) are cleaved as a signal peptide. AXPX repeat units lie at residues 24–27 (AEPL), 30–33 (AAPA), 44–47 (ASPI), 52–55 (ANPE), and 58–61 (ASPE). A propeptide spanning residues 25-62 (EPLPEAAPAPSPLAEAEALASPIAEALANPEALASPEA) is cleaved from the precursor. At L76 the chain carries Leucine amide.

Expressed by the venom gland.

The protein localises to the secreted. Its subcellular location is the target cell membrane. Antimicrobial peptide with strong activity against the fungi C.albicans (MIC=6 uM) and B.cinerea (MIC=10 uM), and weaker activity against the Gram-negative bacterium E.coli (MIC=97 uM) and Gram-positive bacterium S.aureus (MIC=97 uM). Shows cytolytic activity against insect cell lines. Has potent hemolytic activity against ovine erythrocytes (80% at 50 uM), but has no hemolytic activity against human erythrocytes. In vivo, peptide injection in the vicinity of the head and thorax of lepidopteran larvae induces feeding disorder that lasts one or two days before recovering. The protein is Eumenine mastoparan-OD of Orancistrocerus drewseni (Solitary wasp).